The sequence spans 293 residues: ATP synthase gamma chain (293 aa).

It belongs to the ATPase gamma chain family. F-type ATPases have 2 components, CF(1) - the catalytic core - and CF(0) - the membrane proton channel. CF(1) has five subunits: alpha(3), beta(3), gamma(1), delta(1), epsilon(1). CF(0) has three main subunits: a, b and c.

The protein resides in the cell inner membrane. In terms of biological role, produces ATP from ADP in the presence of a proton gradient across the membrane. The gamma chain is believed to be important in regulating ATPase activity and the flow of protons through the CF(0) complex. The sequence is that of ATP synthase gamma chain from Allorhizobium ampelinum (strain ATCC BAA-846 / DSM 112012 / S4) (Agrobacterium vitis (strain S4)).